A 249-amino-acid polypeptide reads, in one-letter code: Adenosylcobinamide-GDP ribazoletransferase (249 aa).

6 helical membrane passes run 32 to 52, 53 to 73, 107 to 127, 136 to 156, 190 to 210, and 224 to 244; these read MVAFPLAGTLIGGLVAATWFG, ATWLWGTTTGSLCAILTWGAI, IGTMGAIALISILLLKWLFVL, ALIVAPTLGRWVDIIGIFWFP, LLWWWAGLIFAVVIVATIIIA, and TYGALCEIAEMLVLAVVAALV.

The protein belongs to the CobS family. The cofactor is Mg(2+).

It is found in the cell membrane. The catalysed reaction is alpha-ribazole + adenosylcob(III)inamide-GDP = adenosylcob(III)alamin + GMP + H(+). The enzyme catalyses alpha-ribazole 5'-phosphate + adenosylcob(III)inamide-GDP = adenosylcob(III)alamin 5'-phosphate + GMP + H(+). Its pathway is cofactor biosynthesis; adenosylcobalamin biosynthesis; adenosylcobalamin from cob(II)yrinate a,c-diamide: step 7/7. Its function is as follows. Joins adenosylcobinamide-GDP and alpha-ribazole to generate adenosylcobalamin (Ado-cobalamin). Also synthesizes adenosylcobalamin 5'-phosphate from adenosylcobinamide-GDP and alpha-ribazole 5'-phosphate. The chain is Adenosylcobinamide-GDP ribazoletransferase from Herpetosiphon aurantiacus (strain ATCC 23779 / DSM 785 / 114-95).